Reading from the N-terminus, the 570-residue chain is Membrane protein insertase YidC (570 aa).

A compositionally biased stretch (polar residues) spans 31-60; that stretch reads QQPVAQTPSVTIDSNGADSSALLNSPNTGE. The interval 31 to 79 is disordered; sequence QQPVAQTPSVTIDSNGADSSALLNSPNTGELDTPETASKPATAEDSNIS. 5 consecutive transmembrane segments (helical) span residues 230–250, 378–398, 444–464, 487–507, and 522–542; these read PTFS…STPE, WGIA…HLSA, LGGC…YWVL, PYFV…SLNP, and PIIF…YWLV.

This sequence belongs to the OXA1/ALB3/YidC family. Type 1 subfamily. In terms of assembly, interacts with the Sec translocase complex via SecD. Specifically interacts with transmembrane segments of nascent integral membrane proteins during membrane integration.

It is found in the cell inner membrane. Its function is as follows. Required for the insertion and/or proper folding and/or complex formation of integral membrane proteins into the membrane. Involved in integration of membrane proteins that insert both dependently and independently of the Sec translocase complex, as well as at least some lipoproteins. Aids folding of multispanning membrane proteins. The protein is Membrane protein insertase YidC of Hahella chejuensis (strain KCTC 2396).